The following is a 448-amino-acid chain: NADP-specific glutamate dehydrogenase (448 aa).

3 residues coordinate substrate: Lys88, Gln109, and Lys112. Lys124 acts as the Proton donor in catalysis. Residue Gly163 coordinates substrate. Residues Thr207 and Asn238 each contribute to the NADP(+) site. A substrate-binding site is contributed by Ser381.

This sequence belongs to the Glu/Leu/Phe/Val dehydrogenases family. In terms of assembly, homohexamer.

The catalysed reaction is L-glutamate + NADP(+) + H2O = 2-oxoglutarate + NH4(+) + NADPH + H(+). Its function is as follows. Catalyzes the reversible oxidative deamination of glutamate to alpha-ketoglutarate and ammonia. The protein is NADP-specific glutamate dehydrogenase (gdhA) of Helicobacter pylori (strain J99 / ATCC 700824) (Campylobacter pylori J99).